Here is a 461-residue protein sequence, read N- to C-terminus: UDP-N-acetylmuramoylalanine--D-glutamate ligase (461 aa).

Residue 123 to 129 (GTNGKTT) coordinates ATP.

The protein belongs to the MurCDEF family.

The protein resides in the cytoplasm. The enzyme catalyses UDP-N-acetyl-alpha-D-muramoyl-L-alanine + D-glutamate + ATP = UDP-N-acetyl-alpha-D-muramoyl-L-alanyl-D-glutamate + ADP + phosphate + H(+). It functions in the pathway cell wall biogenesis; peptidoglycan biosynthesis. Its function is as follows. Cell wall formation. Catalyzes the addition of glutamate to the nucleotide precursor UDP-N-acetylmuramoyl-L-alanine (UMA). The chain is UDP-N-acetylmuramoylalanine--D-glutamate ligase from Natranaerobius thermophilus (strain ATCC BAA-1301 / DSM 18059 / JW/NM-WN-LF).